A 318-amino-acid polypeptide reads, in one-letter code: B3 domain-containing protein At1g05930 (318 aa).

A DNA-binding region (TF-B3) is located at residues 201–293; sequence FNRLISNDFL…VLCFAMRQWR (93 aa).

The protein resides in the nucleus. In Arabidopsis thaliana (Mouse-ear cress), this protein is B3 domain-containing protein At1g05930.